A 283-amino-acid polypeptide reads, in one-letter code: Pantothenate synthetase (283 aa).

34–41 (MGALHDGH) is a binding site for ATP. Residue histidine 41 is the Proton donor of the active site. Glutamine 65 is a (R)-pantoate binding site. Glutamine 65 is a beta-alanine binding site. ATP is bound at residue 152–155 (GSKD). Glutamine 158 is a binding site for (R)-pantoate. ATP contacts are provided by residues isoleucine 181 and 189–192 (MSSR).

This sequence belongs to the pantothenate synthetase family. In terms of assembly, homodimer.

Its subcellular location is the cytoplasm. It catalyses the reaction (R)-pantoate + beta-alanine + ATP = (R)-pantothenate + AMP + diphosphate + H(+). It participates in cofactor biosynthesis; (R)-pantothenate biosynthesis; (R)-pantothenate from (R)-pantoate and beta-alanine: step 1/1. Catalyzes the condensation of pantoate with beta-alanine in an ATP-dependent reaction via a pantoyl-adenylate intermediate. This Rhodopseudomonas palustris (strain HaA2) protein is Pantothenate synthetase.